Here is a 102-residue protein sequence, read N- to C-terminus: Large ribosomal subunit protein bL21 (102 aa).

The protein belongs to the bacterial ribosomal protein bL21 family. In terms of assembly, part of the 50S ribosomal subunit. Contacts protein L20.

Functionally, this protein binds to 23S rRNA in the presence of protein L20. This chain is Large ribosomal subunit protein bL21, found in Nitratidesulfovibrio vulgaris (strain ATCC 29579 / DSM 644 / CCUG 34227 / NCIMB 8303 / VKM B-1760 / Hildenborough) (Desulfovibrio vulgaris).